The primary structure comprises 271 residues: Cytosolic Fe-S cluster assembly factor NUBP2 (271 aa).

M1 carries the post-translational modification N-acetylmethionine. 22-29 provides a ligand contact to ATP; the sequence is GKGGVGKS. [4Fe-4S] cluster-binding residues include C196 and C199.

Belongs to the Mrp/NBP35 ATP-binding proteins family. NUBP2/CFD1 subfamily. As to quaternary structure, heterotetramer of 2 NUBP1 and 2 NUBP2 chains. Interacts with KIFC1. Interacts with NUBP1. The cofactor is [4Fe-4S] cluster. Widely expressed with highest expression in skeletal muscle.

The protein localises to the nucleus. Its subcellular location is the cytoplasm. The protein resides in the cytoskeleton. It localises to the microtubule organizing center. It is found in the centrosome. The protein localises to the cilium axoneme. Its subcellular location is the centriole. In terms of biological role, component of the cytosolic iron-sulfur (Fe/S) protein assembly (CIA) machinery. Required for maturation of extramitochondrial Fe-S proteins. The NUBP1-NUBP2 heterotetramer forms a Fe-S scaffold complex, mediating the de novo assembly of an Fe-S cluster and its transfer to target apoproteins. Negatively regulates cilium formation and structure. This Homo sapiens (Human) protein is Cytosolic Fe-S cluster assembly factor NUBP2.